Reading from the N-terminus, the 125-residue chain is Oxytocin-neurophysin 1 (125 aa).

Positions methionine 1 to alanine 19 are cleaved as a signal peptide. Cysteine 20 and cysteine 25 are joined by a disulfide. Residue glycine 28 is modified to Glycine amide. Disulfide bonds link cysteine 41–cysteine 85, cysteine 44–cysteine 58, cysteine 52–cysteine 75, cysteine 59–cysteine 65, cysteine 92–cysteine 104, cysteine 98–cysteine 116, and cysteine 105–cysteine 110.

This sequence belongs to the vasopressin/oxytocin family. Interacts with oxytocin receptor (Ki=1.5 nM). Interacts with vasopressin V1aR/AVPR1A (Ki=37 nM), V1bR/AVPR1B (Ki=222 nM), and V2R/AVPR2 receptors (Ki=823 nM).

Functionally, neurophysin 1 specifically binds oxytocin. Its function is as follows. Oxytocin causes contraction of the smooth muscle of the uterus and of the mammary gland. Acts by binding to oxytocin receptor (OXTR). This is Oxytocin-neurophysin 1 (OXT) from Sus scrofa (Pig).